The sequence spans 358 residues: DNA polymerase IV (358 aa).

In terms of domain architecture, UmuC spans 4–185; that stretch reads IIHIDMDCYF…LSLRKIPGVG (182 aa). Residues aspartate 8 and aspartate 103 each contribute to the Mg(2+) site. Residue glutamate 104 is part of the active site.

This sequence belongs to the DNA polymerase type-Y family. Monomer. Mg(2+) serves as cofactor.

The protein resides in the cytoplasm. The catalysed reaction is DNA(n) + a 2'-deoxyribonucleoside 5'-triphosphate = DNA(n+1) + diphosphate. Poorly processive, error-prone DNA polymerase involved in untargeted mutagenesis. Copies undamaged DNA at stalled replication forks, which arise in vivo from mismatched or misaligned primer ends. These misaligned primers can be extended by PolIV. Exhibits no 3'-5' exonuclease (proofreading) activity. May be involved in translesional synthesis, in conjunction with the beta clamp from PolIII. This chain is DNA polymerase IV, found in Shewanella baltica (strain OS185).